The chain runs to 286 residues: Bifunctional protein FolD (286 aa).

Residues 165–167 (GRS), S190, and V231 each bind NADP(+).

This sequence belongs to the tetrahydrofolate dehydrogenase/cyclohydrolase family. Homodimer.

It carries out the reaction (6R)-5,10-methylene-5,6,7,8-tetrahydrofolate + NADP(+) = (6R)-5,10-methenyltetrahydrofolate + NADPH. It catalyses the reaction (6R)-5,10-methenyltetrahydrofolate + H2O = (6R)-10-formyltetrahydrofolate + H(+). The protein operates within one-carbon metabolism; tetrahydrofolate interconversion. In terms of biological role, catalyzes the oxidation of 5,10-methylenetetrahydrofolate to 5,10-methenyltetrahydrofolate and then the hydrolysis of 5,10-methenyltetrahydrofolate to 10-formyltetrahydrofolate. The polypeptide is Bifunctional protein FolD (Bacillus cereus (strain ATCC 10987 / NRS 248)).